The primary structure comprises 134 residues: Two-component response regulator ORR5 (134 aa).

Residues 16-133 form the Response regulatory domain; the sequence is HVLAVDDSSV…DVSRLCSRVL (118 aa). Asp66 is modified (4-aspartylphosphate).

Belongs to the ARR family. Type-A subfamily. Two-component system major event consists of a His-to-Asp phosphorelay between a sensor histidine kinase (HK) and a response regulator (RR). In plants, the His-to-Asp phosphorelay involves an additional intermediate named Histidine-containing phosphotransfer protein (HPt). This multistep phosphorelay consists of a His-Asp-His-Asp sequential transfer of a phosphate group between first a His and an Asp of the HK protein, followed by the transfer to a conserved His of the HPt protein and finally the transfer to an Asp in the receiver domain of the RR protein. Expressed in mature leaves and shoots, and at low levels in roots and flowers.

Functions as a response regulator involved in His-to-Asp phosphorelay signal transduction system. Phosphorylation of the Asp residue in the receiver domain activates the ability of the protein to promote the transcription of target genes. Type-A response regulators seem to act as negative regulators of the cytokinin signaling. In Oryza sativa subsp. indica (Rice), this protein is Two-component response regulator ORR5.